The chain runs to 235 residues: tRNA pseudouridine synthase B (235 aa).

Catalysis depends on Asp48, which acts as the Nucleophile.

Belongs to the pseudouridine synthase TruB family. Type 1 subfamily.

The catalysed reaction is uridine(55) in tRNA = pseudouridine(55) in tRNA. Functionally, responsible for synthesis of pseudouridine from uracil-55 in the psi GC loop of transfer RNAs. The protein is tRNA pseudouridine synthase B of Phocaeicola vulgatus (strain ATCC 8482 / DSM 1447 / JCM 5826 / CCUG 4940 / NBRC 14291 / NCTC 11154) (Bacteroides vulgatus).